Here is a 312-residue protein sequence, read N- to C-terminus: sn-1-specific diacylglycerol lipase ABHD11 (312 aa).

A mitochondrion-targeting transit peptide spans 1–14 (MITFKSFHCSRGWH). Residues 62 to 297 (PPLVLLHGLF…GAGHWVHADK (236 aa)) form the AB hydrolase-1 domain. Catalysis depends on charge relay system residues S136, E232, and H291.

Belongs to the AB hydrolase superfamily. In terms of processing, phosphorylated.

It is found in the mitochondrion. It localises to the mitochondrion matrix. It carries out the reaction 1-octadecanoyl-2-(5Z,8Z,11Z,14Z-eicosatetraenoyl)-sn-glycerol + H2O = 2-(5Z,8Z,11Z,14Z-eicosatetraenoyl)-glycerol + octadecanoate + H(+). The enzyme catalyses a 1,2-diacyl-sn-glycerol + H2O = a 2-acylglycerol + a fatty acid + H(+). The catalysed reaction is a 1,3-diacyl-sn-glycerol + H2O = a 1-acyl-sn-glycerol + a fatty acid + H(+). It catalyses the reaction 1-octadecanoyl-2-(9Z-octadecenoyl)-sn-glycerol + H2O = 2-(9Z-octadecenoyl)-glycerol + octadecanoate + H(+). It carries out the reaction 1-octadecanoyl-2-(4Z,7Z,10Z,13Z,16Z,19Z-docosahexaenoyl)-sn-glycerol + H2O = 2-(4Z,7Z,10Z,13Z,16Z,19Z-docosahexaenoyl)-glycerol + octadecanoate + H(+). The enzyme catalyses 1,2-didecanoylglycerol + H2O = decanoylglycerol + decanoate + H(+). Functionally, catalyzes the hydrolysis of diacylglycerol in vitro and may function as a key regulator in lipid metabolism, namely by regulating the intracellular levels of diacylglycerol. 1,2-diacyl-sn-glycerols are the preferred substrate over 1,3-diacyl-sn-glycerols. The enzyme hydrolyzes stearate in preference to palmitate from the sn-1 position of 1,2-diacyl-sn-glycerols. The protein is sn-1-specific diacylglycerol lipase ABHD11 of Xenopus laevis (African clawed frog).